Reading from the N-terminus, the 108-residue chain is uncharacterized protein (108 aa).

Residues 1 to 20 (MNLKSIIFVLFIAFFAFSLA) form the signal peptide. An N-linked (GlcNAc...) asparagine glycan is attached at Asn-39.

It belongs to the Dictyostelium gerABC family.

Its subcellular location is the secreted. This is an uncharacterized protein from Dictyostelium discoideum (Social amoeba).